The primary structure comprises 605 residues: Beta-hexosaminidase ARB_07893 (605 aa).

The N-terminal stretch at 1–18 is a signal peptide; it reads MLWIWVPGILGLFGRVEA. Residue Asn30 is glycosylated (N-linked (GlcNAc...) asparagine). Glu293 (nucleophile) is an active-site residue. Residue Asn342 is glycosylated (N-linked (GlcNAc...) asparagine). The active-site Proton donor is Glu374. A glycan (N-linked (GlcNAc...) asparagine) is linked at Asn449.

It belongs to the glycosyl hydrolase 20 family.

Its subcellular location is the secreted. The catalysed reaction is Hydrolysis of terminal non-reducing N-acetyl-D-hexosamine residues in N-acetyl-beta-D-hexosaminides.. Beta-hexosaminidase that shows a broad substrate specificity. This Arthroderma benhamiae (strain ATCC MYA-4681 / CBS 112371) (Trichophyton mentagrophytes) protein is Beta-hexosaminidase ARB_07893.